The chain runs to 420 residues: Tyrosine--tRNA ligase 2 (420 aa).

An L-tyrosine-binding site is contributed by Y36. Residues 41-50 carry the 'HIGH' region motif; that stretch reads PTADSLHIGH. Residues Y171 and Q175 each coordinate L-tyrosine. Residues 231-235 carry the 'KMSKS' region motif; sequence KFGKT. K234 contacts ATP. Positions 354–420 constitute an S4 RNA-binding domain; sequence LSLVDLLVTS…GKKKYFLLKY (67 aa).

This sequence belongs to the class-I aminoacyl-tRNA synthetase family. TyrS type 1 subfamily. As to quaternary structure, homodimer.

The protein resides in the cytoplasm. The catalysed reaction is tRNA(Tyr) + L-tyrosine + ATP = L-tyrosyl-tRNA(Tyr) + AMP + diphosphate + H(+). Its function is as follows. Catalyzes the attachment of tyrosine to tRNA(Tyr) in a two-step reaction: tyrosine is first activated by ATP to form Tyr-AMP and then transferred to the acceptor end of tRNA(Tyr). This chain is Tyrosine--tRNA ligase 2, found in Enterococcus faecalis (strain ATCC 700802 / V583).